We begin with the raw amino-acid sequence, 502 residues long: ATP synthase subunit alpha (502 aa).

ATP is bound at residue 169 to 176 (GDRQTGKT).

The protein belongs to the ATPase alpha/beta chains family. F-type ATPases have 2 components, CF(1) - the catalytic core - and CF(0) - the membrane proton channel. CF(1) has five subunits: alpha(3), beta(3), gamma(1), delta(1), epsilon(1). CF(0) has three main subunits: a(1), b(2) and c(9-12). The alpha and beta chains form an alternating ring which encloses part of the gamma chain. CF(1) is attached to CF(0) by a central stalk formed by the gamma and epsilon chains, while a peripheral stalk is formed by the delta and b chains.

It is found in the cell membrane. The enzyme catalyses ATP + H2O + 4 H(+)(in) = ADP + phosphate + 5 H(+)(out). Its function is as follows. Produces ATP from ADP in the presence of a proton gradient across the membrane. The alpha chain is a regulatory subunit. This Staphylococcus aureus (strain COL) protein is ATP synthase subunit alpha.